Here is a 450-residue protein sequence, read N- to C-terminus: 23S rRNA (uracil(1939)-C(5))-methyltransferase RlmD (450 aa).

A disordered region spans residues 1–22 (MAKHDRGLRFQPAGGSRAPQIP). A TRAM domain is found at 20–78 (QIPVGKKQRLTIQRLANDGRGIAFVEGRTWFVSGALAGEEVEARVLGSHGKVVEARAER). [4Fe-4S] cluster contacts are provided by C91, C97, C100, and C179. Residues Q283, F312, N317, E333, D360, and D381 each contribute to the S-adenosyl-L-methionine site. The active-site Nucleophile is the C407.

This sequence belongs to the class I-like SAM-binding methyltransferase superfamily. RNA M5U methyltransferase family. RlmD subfamily.

The enzyme catalyses uridine(1939) in 23S rRNA + S-adenosyl-L-methionine = 5-methyluridine(1939) in 23S rRNA + S-adenosyl-L-homocysteine + H(+). Its function is as follows. Catalyzes the formation of 5-methyl-uridine at position 1939 (m5U1939) in 23S rRNA. The sequence is that of 23S rRNA (uracil(1939)-C(5))-methyltransferase RlmD from Pseudomonas fluorescens (strain ATCC BAA-477 / NRRL B-23932 / Pf-5).